Here is a 444-residue protein sequence, read N- to C-terminus: Xylose isomerase (444 aa).

Active-site residues include histidine 101 and aspartate 104. Mg(2+) is bound by residues glutamate 232, glutamate 268, histidine 271, aspartate 296, aspartate 307, aspartate 309, and aspartate 339.

It belongs to the xylose isomerase family. In terms of assembly, homotetramer. Requires Mg(2+) as cofactor.

The protein resides in the cytoplasm. It catalyses the reaction alpha-D-xylose = alpha-D-xylulofuranose. The sequence is that of Xylose isomerase from Thermotoga maritima (strain ATCC 43589 / DSM 3109 / JCM 10099 / NBRC 100826 / MSB8).